We begin with the raw amino-acid sequence, 420 residues long: Exodeoxyribonuclease 7 large subunit (420 aa).

This sequence belongs to the XseA family. As to quaternary structure, heterooligomer composed of large and small subunits.

It is found in the cytoplasm. The catalysed reaction is Exonucleolytic cleavage in either 5'- to 3'- or 3'- to 5'-direction to yield nucleoside 5'-phosphates.. Its function is as follows. Bidirectionally degrades single-stranded DNA into large acid-insoluble oligonucleotides, which are then degraded further into small acid-soluble oligonucleotides. The sequence is that of Exodeoxyribonuclease 7 large subunit from Helicobacter pylori (strain G27).